Consider the following 367-residue polypeptide: 3-ketodihydrosphingosine reductase ksrA (367 aa).

Residues 12 to 32 form a helical membrane-spanning segment; sequence ASPATLGISLILCGFIVYSVS. The NADPH site is built by G53, S55, G57, R78, K82, D108, and L109. Residues 53-57 carry the GXSXG motif; that stretch reads GGSDG. Residues 193-213 form a helical membrane-spanning segment; it reads LIFTCSTLAFVSIAGYAPYSP. Y211 acts as the Proton acceptor in catalysis. The NADP(+) site is built by Y211, K215, and I259. Catalysis depends on K215, which acts as the Lowers pKa of active site Tyr.

This sequence belongs to the short-chain dehydrogenases/reductases (SDR) family.

The protein localises to the endoplasmic reticulum membrane. The catalysed reaction is sphinganine + NADP(+) = 3-oxosphinganine + NADPH + H(+). Its pathway is lipid metabolism; sphingolipid metabolism. Functionally, catalyzes the reduction of 3'-oxosphinganine (3-ketodihydrosphingosine/KDS) to sphinganine (dihydrosphingosine/DHS), the second step of de novo sphingolipid biosynthesis. The chain is 3-ketodihydrosphingosine reductase ksrA from Aspergillus fumigatus (strain ATCC MYA-4609 / CBS 101355 / FGSC A1100 / Af293) (Neosartorya fumigata).